Here is a 318-residue protein sequence, read N- to C-terminus: Putative olfactory receptor 2W6 (318 aa).

Residues 1 to 31 (MGFYHVGQAAFELLTSSFILVGFSDRPHLEL) are Extracellular-facing. The chain crosses the membrane as a helical span at residues 32 to 52 (IVFVVVLIFYLLTLLGNMTIV). Residues 53–63 (LLSALDSRLHT) lie on the Cytoplasmic side of the membrane. A helical membrane pass occupies residues 64 to 84 (PMYFFLANLSFLDMCFTTGSI). The Extracellular portion of the chain corresponds to 85–103 (PQMLYNLWGPDKTISYVGC). C103 and C185 form a disulfide bridge. Residues 104 to 124 (AIQLYFVLALGGVECVLLAVM) traverse the membrane as a helical segment. Topologically, residues 125–145 (AYDRYAAVCKPLHYTIIMHPR) are cytoplasmic. A helical membrane pass occupies residues 146-166 (LCGQLASVAWLSGFGNSLIMA). The Extracellular segment spans residues 167–202 (PQTLMLPRCGHRRVDHFLCEMPALIGMACVDTMMLE). Residues 203-223 (ALAFALAIFIILAPLILILIS) form a helical membrane-spanning segment. The Cytoplasmic portion of the chain corresponds to 224-245 (YGYVGGTVLRIKSAAGRKKAFN). A helical membrane pass occupies residues 246-266 (TCSSHLIVVSLFYGTIIYMYL). Residues 267 to 277 (QPANTYSQDQG) are Extracellular-facing. A helical membrane pass occupies residues 278–298 (KFLTLFYTIVTPSVNPLIYTL). Residues 299-318 (RNKDVKEAMKKVLGKGSAEI) lie on the Cytoplasmic side of the membrane.

The protein belongs to the G-protein coupled receptor 1 family.

It is found in the cell membrane. Odorant receptor. The sequence is that of Putative olfactory receptor 2W6 (OR2W6P) from Homo sapiens (Human).